Reading from the N-terminus, the 90-residue chain is UPF0297 protein LVIS_1222 (90 aa).

Belongs to the UPF0297 family.

This is UPF0297 protein LVIS_1222 from Levilactobacillus brevis (strain ATCC 367 / BCRC 12310 / CIP 105137 / JCM 1170 / LMG 11437 / NCIMB 947 / NCTC 947) (Lactobacillus brevis).